A 193-amino-acid chain; its full sequence is Protein hunchback (193 aa).

Disordered stretches follow at residues 16–126 (SHHH…ATTT) and 146–193 (SNDK…KYMA). The span at 17–31 (HHHHHHHAHHSHHQH) shows a compositional bias: basic residues. 2 stretches are compositionally biased toward low complexity: residues 35–46 (SNSNSNASSPHQ) and 56–77 (SSNNLQLEQYLKQQQQQQQQQQ). Residues 89–99 (PSPSNNDQNSR) are compositionally biased toward polar residues. Over residues 174–193 (EPEKEHDLMSNSSEDMKYMA) the composition is skewed to basic and acidic residues.

Belongs to the hunchback C2H2-type zinc-finger protein family.

It is found in the nucleus. Functionally, gap class segmentation protein that controls development of head structures. This chain is Protein hunchback (hb), found in Drosophila iki (Fruit fly).